The chain runs to 98 residues: NADH-ubiquinone oxidoreductase chain 4L (98 aa).

Helical transmembrane passes span 1–21 (MTPT…GMLI), 26–46 (LMAS…MTAV), and 61–81 (IIML…LVSI).

It belongs to the complex I subunit 4L family. As to quaternary structure, core subunit of respiratory chain NADH dehydrogenase (Complex I) which is composed of 45 different subunits.

The protein localises to the mitochondrion inner membrane. The enzyme catalyses a ubiquinone + NADH + 5 H(+)(in) = a ubiquinol + NAD(+) + 4 H(+)(out). Functionally, core subunit of the mitochondrial membrane respiratory chain NADH dehydrogenase (Complex I) which catalyzes electron transfer from NADH through the respiratory chain, using ubiquinone as an electron acceptor. Part of the enzyme membrane arm which is embedded in the lipid bilayer and involved in proton translocation. The protein is NADH-ubiquinone oxidoreductase chain 4L (MT-ND4L) of Papio hamadryas (Hamadryas baboon).